Consider the following 150-residue polypeptide: Aspartate 1-decarboxylase (150 aa).

Ser-24 (schiff-base intermediate with substrate; via pyruvic acid) is an active-site residue. Pyruvic acid (Ser) is present on Ser-24. A substrate-binding site is contributed by Thr-56. Residue Tyr-57 is the Proton donor of the active site. Gly-72–Ala-74 lines the substrate pocket.

This sequence belongs to the PanD family. In terms of assembly, heterooctamer of four alpha and four beta subunits. It depends on pyruvate as a cofactor. Is synthesized initially as an inactive proenzyme, which is activated by self-cleavage at a specific serine bond to produce a beta-subunit with a hydroxyl group at its C-terminus and an alpha-subunit with a pyruvoyl group at its N-terminus.

The protein resides in the cytoplasm. It carries out the reaction L-aspartate + H(+) = beta-alanine + CO2. Its pathway is cofactor biosynthesis; (R)-pantothenate biosynthesis; beta-alanine from L-aspartate: step 1/1. Catalyzes the pyruvoyl-dependent decarboxylation of aspartate to produce beta-alanine. In Beijerinckia indica subsp. indica (strain ATCC 9039 / DSM 1715 / NCIMB 8712), this protein is Aspartate 1-decarboxylase.